Here is a 365-residue protein sequence, read N- to C-terminus: Succinyl-diaminopimelate desuccinylase (365 aa).

Zn(2+) is bound at residue His65. The active site involves Asp67. Asp96 is a Zn(2+) binding site. Glu126 functions as the Proton acceptor in the catalytic mechanism. Residues Glu127, Glu155, and His340 each contribute to the Zn(2+) site.

This sequence belongs to the peptidase M20A family. DapE subfamily. Homodimer. It depends on Zn(2+) as a cofactor. Requires Co(2+) as cofactor.

The enzyme catalyses N-succinyl-(2S,6S)-2,6-diaminopimelate + H2O = (2S,6S)-2,6-diaminopimelate + succinate. Its pathway is amino-acid biosynthesis; L-lysine biosynthesis via DAP pathway; LL-2,6-diaminopimelate from (S)-tetrahydrodipicolinate (succinylase route): step 3/3. Its function is as follows. Catalyzes the hydrolysis of N-succinyl-L,L-diaminopimelic acid (SDAP), forming succinate and LL-2,6-diaminopimelate (DAP), an intermediate involved in the bacterial biosynthesis of lysine and meso-diaminopimelic acid, an essential component of bacterial cell walls. The protein is Succinyl-diaminopimelate desuccinylase of Campylobacter jejuni subsp. jejuni serotype O:2 (strain ATCC 700819 / NCTC 11168).